A 667-amino-acid chain; its full sequence is tRNA 5-methylaminomethyl-2-thiouridine biosynthesis bifunctional protein MnmC (667 aa).

The tRNA (mnm(5)s(2)U34)-methyltransferase stretch occupies residues 1-215 (MKFINGILFN…KREMIRAYFN (215 aa)). An FAD-dependent cmnm(5)s(2)U34 oxidoreductase region spans residues 240-667 (IGAGIAGIVT…LIRKLKKGLK (428 aa)).

This sequence in the N-terminal section; belongs to the methyltransferase superfamily. tRNA (mnm(5)s(2)U34)-methyltransferase family. In the C-terminal section; belongs to the DAO family. Requires FAD as cofactor.

It is found in the cytoplasm. It carries out the reaction 5-aminomethyl-2-thiouridine(34) in tRNA + S-adenosyl-L-methionine = 5-methylaminomethyl-2-thiouridine(34) in tRNA + S-adenosyl-L-homocysteine + H(+). Functionally, catalyzes the last two steps in the biosynthesis of 5-methylaminomethyl-2-thiouridine (mnm(5)s(2)U) at the wobble position (U34) in tRNA. Catalyzes the FAD-dependent demodification of cmnm(5)s(2)U34 to nm(5)s(2)U34, followed by the transfer of a methyl group from S-adenosyl-L-methionine to nm(5)s(2)U34, to form mnm(5)s(2)U34. The polypeptide is tRNA 5-methylaminomethyl-2-thiouridine biosynthesis bifunctional protein MnmC (Campylobacter hominis (strain ATCC BAA-381 / DSM 21671 / CCUG 45161 / LMG 19568 / NCTC 13146 / CH001A)).